Here is a 189-residue protein sequence, read N- to C-terminus: Chitin synthase 1 (189 aa).

This sequence belongs to the chitin synthase family. Class I subfamily.

It is found in the cell membrane. The enzyme catalyses [(1-&gt;4)-N-acetyl-beta-D-glucosaminyl](n) + UDP-N-acetyl-alpha-D-glucosamine = [(1-&gt;4)-N-acetyl-beta-D-glucosaminyl](n+1) + UDP + H(+). Functionally, polymerizes chitin, a structural polymer of the cell wall and septum, by transferring the sugar moiety of UDP-GlcNAc to the non-reducing end of the growing chitin polymer. In Botryotinia fuckeliana (Noble rot fungus), this protein is Chitin synthase 1 (chs1).